The chain runs to 108 residues: Putative DNA-directed RNA polymerase subunit 1 inactive homolog (108 aa).

The protein is Putative DNA-directed RNA polymerase subunit 1 inactive homolog of Acanthamoeba polyphaga (Amoeba).